The primary structure comprises 278 residues: MNNILSEEVLNVTDFTTSRQLTLWKREDLQSSQLDDVAEEVPVALVYNGISHVVMMASPKDLTHFAMGFSLSEGIIDSPREIYGMDVVPSCNGLEVQIDLSSRRFMGLKARRRALAGRTGCGVCGVEQLNDIGKPVQPLPFSQTFNLGNLDRALKHLNDFQPTSKLTGCTHAAAWVMPSGELAGGHEDVGRHVALDKLLGRRAMEGEEWRQGAALVSSRASYEMVQKSAMCGVEILFAVSAATTLAVEVAERCNLTLVGFCKPGRATIYTHPQRLIAD.

Cys121 acts as the Cysteine persulfide intermediate in catalysis. Phe260–Arg265 is a binding site for Mo-bis(molybdopterin guanine dinucleotide).

Belongs to the FdhD family.

Its subcellular location is the cytoplasm. Its function is as follows. Required for formate dehydrogenase (FDH) activity. Acts as a sulfur carrier protein that transfers sulfur from IscS to the molybdenum cofactor prior to its insertion into FDH. The chain is Sulfur carrier protein FdhD from Salmonella paratyphi A (strain ATCC 9150 / SARB42).